The following is a 138-amino-acid chain: Sporulation-specific protein 13 (138 aa).

Positions 1–11 (MMSNSQISKLF) are enriched in polar residues. Residues 1–31 (MMSNSQISKLFSSISNKENSNENALKESTNK) are disordered. Residues 12–23 (SSISNKENSNEN) show a composition bias toward low complexity. Residues 16–104 (NKENSNENAL…KRELDYLRAK (89 aa)) adopt a coiled-coil conformation.

As to quaternary structure, interacts with spo2.

It localises to the cytoplasm. The protein resides in the cytoskeleton. Its subcellular location is the microtubule organizing center. The protein localises to the spindle pole body. In terms of biological role, involved in sporulation. Plays a significant role in modification of the spindle pole body prior to spore formation and is required for initiating forespore membrane formation. This is Sporulation-specific protein 13 (spo13) from Schizosaccharomyces pombe (strain 972 / ATCC 24843) (Fission yeast).